The sequence spans 751 residues: MMESPKYKKSTCSVTNLGGTCILPQKGATAPKAKDVSPELLVNKMDNLCQDWARTRNEYNKVHIEQAPTDSYFGVVHSHTPKKKYTSRDSDSEPEATSTRRSATAQRAANLKSSPVDQWSTTPPQPQPQPAAPTVKKTCASSPPAALSVKRTCTSPPPPPVLIDDDTGEDAFYDTNDPDIFYDIENGVSELETEGPKRPVYYQRNIRYPIDGSVPQESEQWYDPIDDEFLASSGDVVSLEPSPIAAFQPTPPKTVQFVPMPEEIIVPPPPPPKTVVDEGVQAMPYTVDQMIQTDFEESPLLANVNLRTIPIEEVNPNFSPVLMQDMVRDSFVFGTVAQRVMASQRVKQFFKELIEQDVSLAGRMCMDSGSPQLNLYNSLMGVKLLYRWRSSTTFYRAIVPEIDEPVQVMQDVLSSSEWAKFDSQAGIPPKMVYIHYKLLNDLVKTLICPNFQLTHAALVCVDCRPEAVGSDGLQDGRQRRCSNLVSEYHEMTLEDLFNTIKPADLNAKNIILSVLFQMLYAVATVQKQFGMGGLFANADSVHVRRIQPGGFWHYTVNGLRYSVPNYGYLVILTNFTDVVNYRPDFATTRYFGRRQAKVVPTRNWYKFVPFTTRYRPFVTVDPITQAKTTAYAPNPPTEGITINEFYKDSSDLRPSVPVDLNDMITFPVPEFHLTICRLFSFFSKFYDSNFIGNDPFVRNLVDRYSQPFEFPDVYWPEDGVSRVLACYTIEEIYPNWVDGDTDYVIESYNLD.

The tract at residues 73–169 (FGVVHSHTPK…PVLIDDDTGE (97 aa)) is disordered. The span at 96–109 (ATSTRRSATAQRAA) shows a compositional bias: low complexity. The segment covering 111-120 (LKSSPVDQWS) has biased composition (polar residues).

This is an uncharacterized protein from Invertebrate iridescent virus 3 (IIV-3).